Consider the following 83-residue polypeptide: Large ribosomal subunit protein bL31B (83 aa).

The protein belongs to the bacterial ribosomal protein bL31 family. Type B subfamily. Part of the 50S ribosomal subunit.

In Lactobacillus johnsonii (strain CNCM I-12250 / La1 / NCC 533), this protein is Large ribosomal subunit protein bL31B.